A 34-amino-acid polypeptide reads, in one-letter code: Photosystem II reaction center protein M (34 aa).

A helical membrane pass occupies residues 7–27 (GFVASLMFILVPAIFLIVLYI).

This sequence belongs to the PsbM family. As to quaternary structure, PSII is composed of 1 copy each of membrane proteins PsbA, PsbB, PsbC, PsbD, PsbE, PsbF, PsbH, PsbI, PsbJ, PsbK, PsbL, PsbM, PsbT, PsbX, PsbY, PsbZ, Psb30/Ycf12, peripheral proteins PsbO, CyanoQ (PsbQ), PsbU, PsbV and a large number of cofactors. It forms dimeric complexes.

The protein localises to the cellular thylakoid membrane. Functionally, one of the components of the core complex of photosystem II (PSII). PSII is a light-driven water:plastoquinone oxidoreductase that uses light energy to abstract electrons from H(2)O, generating O(2) and a proton gradient subsequently used for ATP formation. It consists of a core antenna complex that captures photons, and an electron transfer chain that converts photonic excitation into a charge separation. This subunit is found at the monomer-monomer interface. This is Photosystem II reaction center protein M from Synechococcus sp. (strain CC9902).